Reading from the N-terminus, the 862-residue chain is Fork head protein homolog 2 (862 aa).

The 70-residue stretch at 83–152 (VSIGRNTDPL…NGAKVNFQRT (70 aa)) folds into the FHA domain. Residues 339–430 (VKPPHSYATM…QQEFLNKWNT (92 aa)) constitute a DNA-binding region (fork-head). 4 disordered regions span residues 498-528 (PSKG…QEQR), 611-663 (SDSA…GTTT), 698-730 (PERG…LQTS), and 750-846 (ESNN…ANAK). Residues 504–520 (PASQQSQPPVSHQNQSQ) are compositionally biased toward low complexity. Over residues 611–644 (SDSADKSTNNNGGTKMNLPAISTSSLDENGNLEP) the composition is skewed to polar residues. The segment covering 645 to 655 (TTTTSSGNSNS) has biased composition (low complexity). Position 708 is a phosphoserine (Ser-708). Residues 712–726 (SNSNNTNNNGANNSN) are compositionally biased toward low complexity. 2 stretches are compositionally biased toward polar residues: residues 750–770 (ESNN…NVKS) and 778–788 (LQFSSTNNTPA). Basic and acidic residues predominate over residues 804 to 829 (IKAKENENATSEKDSDSNSNDLETKD). Polar residues predominate over residues 830 to 844 (INSSPLKNQGGSTAN). 2 positions are modified to phosphoserine: Ser-832 and Ser-833.

Interacts with MCM1. Interacts with NDD1. Interacts with the origin recognition complex (ORC) composed of ORC1 to ORC6.

The protein resides in the nucleus. The protein localises to the cytoplasm. Its subcellular location is the cytosol. In terms of biological role, transcription factor that regulates the expression of the CLB2 cluster of genes during the G2/M phase of the mitotic cell cycle. The CLB2 cluster of genes includes mitotic regulators such as CLB1, CLB2, CDC5 and CDC20 as well as SWI5 and ACE2, transcription factors required for the subsequent temporal wave of cell cycle regulated gene expression in the M/G1 phase interval. Involved in HMRa silencing. FKH1 and FKH2 associate with the coding regions of active genes and influence, in opposing ways, transcriptional elongation and termination, and coordinate early transcription elongation and pre-mRNA processing. Both FKH1 and FKH2 play a role as regulators of lifespan in collaboration with the anaphase-promoting complex (APC), likely through combined regulation of stress response, genomic stability, and cell cycle regulation. FKH1 and FKH2 function also in controlling yeast cell morphology by preventing preudohyphal growth. Acts as a rate-limiting replication origin activator via its interaction with the origin recognition complex (ORC). This is Fork head protein homolog 2 from Saccharomyces cerevisiae (strain ATCC 204508 / S288c) (Baker's yeast).